Reading from the N-terminus, the 164-residue chain is Transcription antitermination protein NusB (164 aa).

The protein belongs to the NusB family.

Functionally, involved in transcription antitermination. Required for transcription of ribosomal RNA (rRNA) genes. Binds specifically to the boxA antiterminator sequence of the ribosomal RNA (rrn) operons. The sequence is that of Transcription antitermination protein NusB from Mycolicibacterium gilvum (strain PYR-GCK) (Mycobacterium gilvum (strain PYR-GCK)).